Consider the following 518-residue polypeptide: Protein PAC2 (518 aa).

Positions 23–67 (VIKPWPSVKAYGVEWDDHSRGKHSGTIDDIHYFDVQIPNSGSFLK) constitute a CAP-Gly domain. LRR repeat units lie at residues 153–174 (NVKDLDLSLNLFTNINSLCEFI), 179–201 (NLESLNISQNKLLSGWDNLKEYD), 204–227 (HIKTLRLSSCGLSYKHIGKLLKSF), 229–252 (TLKMLDLSYNNLTSAGIQNFENEI), 255–276 (TLEELNISGNNLISFPLFPKNL), 277–298 (TLKGLNVSNNQISRAPSIAIYS), 299–319 (VESLDITDNKFKERSLIDDLN), and 324–345 (SLKNIHLSGNEFNYNGNYINVE).

The protein resides in the cytoplasm. Its subcellular location is the cytoskeleton. Its function is as follows. Required for viability in the absence of the kinesin-related CIN8 mitotic motor. Seems to be involved in the assembly of alpha-tubulin. The polypeptide is Protein PAC2 (PAC2) (Saccharomyces cerevisiae (strain ATCC 204508 / S288c) (Baker's yeast)).